Consider the following 498-residue polypeptide: WD repeat-containing protein 55 homolog (498 aa).

The segment at 1-133 is disordered; it reads MHTHNNFKTP…TFDLDEDDET (133 aa). 3 stretches are compositionally biased toward acidic residues: residues 12–23, 31–48, and 83–95; these read DEDELDDLDEDM, IEQEVLNESDSDNDEYDL, and SDSDDSMLDDAGD. Positions 114–123 are enriched in polar residues; sequence PSGSNRQSEA. WD repeat units lie at residues 155–194, 199–238, 242–280, 283–322, 325–364, and 409–448; these read KLEDFITDICFHPDRDIIALATIIGDVHLYEYDNEANKLL, VHSKACRDVEFTEDGRFLLTCSKDKCVMVTDMETEKLKKL, AHDDAINTLHVLNENLFATGDDAGTVKLWDLRTKNAIFE, ELEDQITQLTTNDQSKLLLATSADGYLTTFNIAARKMYVQ, PYEEELSCMGIYRGDSKLVVGTSKGRLYTYNWGQFGYHCD, and QHNMPIESLDVNSNGELIASSSHNNDVRFWNVKYFEDFGD.

Belongs to the WD repeat WDR55 family.

This Drosophila erecta (Fruit fly) protein is WD repeat-containing protein 55 homolog.